The sequence spans 204 residues: Holliday junction branch migration complex subunit RuvA (204 aa).

Residues 1–67 (MIGYLEGKIL…QPKPVLIGFN (67 aa)) are domain I. Residues 68 to 145 (SLEEREFFER…VFAGEHGGEP (78 aa)) are domain II. Positions 146–156 (AGPAPVEENFH) are flexible linker. A domain III region spans residues 156-204 (HLLVLDVLVNQLGHKAAEAKELINQAIKRNPAISSPEELFDEVYRGETG).

This sequence belongs to the RuvA family. In terms of assembly, homotetramer. Forms an RuvA(8)-RuvB(12)-Holliday junction (HJ) complex. HJ DNA is sandwiched between 2 RuvA tetramers; dsDNA enters through RuvA and exits via RuvB. An RuvB hexamer assembles on each DNA strand where it exits the tetramer. Each RuvB hexamer is contacted by two RuvA subunits (via domain III) on 2 adjacent RuvB subunits; this complex drives branch migration. In the full resolvosome a probable DNA-RuvA(4)-RuvB(12)-RuvC(2) complex forms which resolves the HJ.

It is found in the cytoplasm. The RuvA-RuvB-RuvC complex processes Holliday junction (HJ) DNA during genetic recombination and DNA repair, while the RuvA-RuvB complex plays an important role in the rescue of blocked DNA replication forks via replication fork reversal (RFR). RuvA specifically binds to HJ cruciform DNA, conferring on it an open structure. The RuvB hexamer acts as an ATP-dependent pump, pulling dsDNA into and through the RuvAB complex. HJ branch migration allows RuvC to scan DNA until it finds its consensus sequence, where it cleaves and resolves the cruciform DNA. The protein is Holliday junction branch migration complex subunit RuvA of Desulfatibacillum aliphaticivorans.